The chain runs to 151 residues: Mating pheromone 3 (151 aa).

Residues 1–16 (MKAIFIILAILMVTQA) form the signal peptide. A propeptide spanning residues 17 to 52 (FKMTSKVNTKLQSQIQSKFQSKNKLASTFQTSSQLK) is cleaved from the precursor.

The protein localises to the secreted. Functionally, mating ciliate pheromones (or gamones) are diffusible extracellular communication signals that distinguish different intraspecific classes of cells commonly referred to as 'mating types'. They prepare the latter for conjugation by changing their cell surface properties. The polypeptide is Mating pheromone 3 (PHR3) (Euplotoides octocarinatus (Freshwater ciliate)).